We begin with the raw amino-acid sequence, 211 residues long: Large ribosomal subunit protein uL4 (211 aa).

The disordered stretch occupies residues 40–85 (QQAHSRQGTASTLTRSEVRGGGRKPYKQKGTGRARQGSVRTPLRPG). A compositionally biased stretch (polar residues) spans 41 to 54 (QAHSRQGTASTLTR). Positions 60–71 (GGRKPYKQKGTG) are enriched in basic residues.

This sequence belongs to the universal ribosomal protein uL4 family. Part of the 50S ribosomal subunit.

Functionally, one of the primary rRNA binding proteins, this protein initially binds near the 5'-end of the 23S rRNA. It is important during the early stages of 50S assembly. It makes multiple contacts with different domains of the 23S rRNA in the assembled 50S subunit and ribosome. Forms part of the polypeptide exit tunnel. The protein is Large ribosomal subunit protein uL4 of Synechococcus sp. (strain CC9311).